The primary structure comprises 1133 residues: Early transcription factor large subunit homolog (1133 aa).

The region spanning Lys-52 to Gln-352 is the Helicase ATP-binding domain. An ATP-binding site is contributed by Trp-99–Ser-106. Positions Asp-281–His-284 match the DEAH box motif. The Helicase C-terminal domain maps to Met-524–Ala-724.

This sequence belongs to the DEAD box helicase family. DEAH subfamily.

Its subcellular location is the virion. The catalysed reaction is ATP + H2O = ADP + phosphate + H(+). Functionally, putative initation factor. This Ornithodoros (relapsing fever ticks) protein is Early transcription factor large subunit homolog.